A 1006-amino-acid chain; its full sequence is Serine/threonine-protein phosphatase BSL3 (1006 aa).

Positions 1 to 67 (MDLDSSMVPE…QQQQQPQVTA (67 aa)) are disordered. 2 stretches are compositionally biased toward low complexity: residues 38–47 (SESESASLTP) and 54–67 (QQQQQQQQQPQVTA). Kelch repeat units follow at residues 138-184 (TSAG…VATA), 242-290 (YLMA…TASA), 295-345 (LLLL…VFVN), 351-398 (SGGA…DAAG), and 419-465 (LIFI…TPPG). Disordered regions lie at residues 454 to 494 (AAAA…LGSP) and 552 to 579 (GEVELPDRDRGAEATPSGKPSLSLIKPD). The residue at position 616 (Ser616) is a Phosphoserine. Mn(2+) is bound by residues Asp709, His711, Asp743, and Asn775. His776 functions as the Proton donor in the catalytic mechanism. Mn(2+) contacts are provided by His828 and His907. At Ser964 the chain carries Phosphoserine. The tract at residues 982–1006 (NVNRPPTPTRGRPQNPNDRGSLAWI) is disordered.

Belongs to the PPP phosphatase family. BSU subfamily. The cofactor is Mn(2+). As to expression, expressed throughout the plant, with a higher level in younger parts.

It is found in the nucleus. It catalyses the reaction O-phospho-L-seryl-[protein] + H2O = L-seryl-[protein] + phosphate. It carries out the reaction O-phospho-L-threonyl-[protein] + H2O = L-threonyl-[protein] + phosphate. Functionally, phosphatase involved in elongation process, probably by acting as a regulator of brassinolide signaling. The chain is Serine/threonine-protein phosphatase BSL3 (BSL3) from Arabidopsis thaliana (Mouse-ear cress).